A 215-amino-acid polypeptide reads, in one-letter code: Nucleoside triphosphate pyrophosphatase (215 aa).

Asp77 serves as the catalytic Proton acceptor.

This sequence belongs to the Maf family. Requires a divalent metal cation as cofactor.

It is found in the cytoplasm. The catalysed reaction is a ribonucleoside 5'-triphosphate + H2O = a ribonucleoside 5'-phosphate + diphosphate + H(+). The enzyme catalyses a 2'-deoxyribonucleoside 5'-triphosphate + H2O = a 2'-deoxyribonucleoside 5'-phosphate + diphosphate + H(+). Nucleoside triphosphate pyrophosphatase. May have a dual role in cell division arrest and in preventing the incorporation of modified nucleotides into cellular nucleic acids. The polypeptide is Nucleoside triphosphate pyrophosphatase (Rickettsia africae (strain ESF-5)).